The primary structure comprises 261 residues: Undecaprenyl-diphosphatase (261 aa).

The next 7 membrane-spanning stretches (helical) occupy residues 38-58 (RSDFFNIVIQAGAILAITFVF), 75-95 (RDYVMKLATAFLITAVVGLAV), 106-126 (IQPIAWALIIGGIWILIAESV), 136-156 (VTWSVAIAVGLAQVVAGVFPG), 181-201 (FSFLVGIPTMFSASSYACFEL), 217-237 (VAFVAAMLTGFAVVKWLLGYI), and 241-261 (SFAPFAYYRIALGLVLLTWLT).

The protein belongs to the UppP family.

It is found in the cell inner membrane. The enzyme catalyses di-trans,octa-cis-undecaprenyl diphosphate + H2O = di-trans,octa-cis-undecaprenyl phosphate + phosphate + H(+). Functionally, catalyzes the dephosphorylation of undecaprenyl diphosphate (UPP). Confers resistance to bacitracin. The sequence is that of Undecaprenyl-diphosphatase from Xylella fastidiosa (strain 9a5c).